Here is a 396-residue protein sequence, read N- to C-terminus: Cysteine protease ATG4A (396 aa).

Cys77 (nucleophile) is an active-site residue. Catalysis depends on residues Asp276 and His278. Residues 390 to 393 carry the LIR motif; that stretch reads FEIL.

The protein belongs to the peptidase C54 family. In terms of assembly, interacts with ATG9A; the interaction is direct.

Its subcellular location is the cytoplasm. It catalyses the reaction [protein]-C-terminal L-amino acid-glycyl-phosphatidylethanolamide + H2O = [protein]-C-terminal L-amino acid-glycine + a 1,2-diacyl-sn-glycero-3-phosphoethanolamine. Inhibited by N-ethylmaleimide. Redox-regulated during autophagy since reducing conditions activate ATG4A whereas an oxidizing environment such as the presence of H(2)O(2) inhibits its activity. Functionally, cysteine protease that plays a key role in autophagy by mediating both proteolytic activation and delipidation of ATG8 family proteins. The protease activity is required for proteolytic activation of ATG8 family proteins: cleaves the C-terminal amino acid of ATG8 proteins to reveal a C-terminal glycine. Exposure of the glycine at the C-terminus is essential for ATG8 proteins conjugation to phosphatidylethanolamine (PE) and insertion to membranes, which is necessary for autophagy. Preferred substrate is GABARAPL2 followed by MAP1LC3A and GABARAP. Protease activity is also required to counteract formation of high-molecular weight conjugates of ATG8 proteins (ATG8ylation): acts as a deubiquitinating-like enzyme that removes ATG8 conjugated to other proteins, such as ATG3. In addition to the protease activity, also mediates delipidation of ATG8 family proteins. Catalyzes delipidation of PE-conjugated forms of ATG8 proteins during macroautophagy. Compared to ATG4B, the major protein for proteolytic activation of ATG8 proteins, shows weaker ability to cleave the C-terminal amino acid of ATG8 proteins, while it displays stronger delipidation activity. Involved in phagophore growth during mitophagy independently of its protease activity and of ATG8 proteins: acts by regulating ATG9A trafficking to mitochondria and promoting phagophore-endoplasmic reticulum contacts during the lipid transfer phase of mitophagy. The sequence is that of Cysteine protease ATG4A from Mus musculus (Mouse).